A 290-amino-acid chain; its full sequence is UPF0761 membrane protein YihY (290 aa).

6 helical membrane passes run Leu44–Phe64, Val104–Leu124, Phe140–Ile160, Ile183–Ile203, Ala210–Leu230, and Val244–Leu264.

Belongs to the UPF0761 family.

Its subcellular location is the cell inner membrane. The protein is UPF0761 membrane protein YihY of Escherichia fergusonii (strain ATCC 35469 / DSM 13698 / CCUG 18766 / IAM 14443 / JCM 21226 / LMG 7866 / NBRC 102419 / NCTC 12128 / CDC 0568-73).